A 229-amino-acid polypeptide reads, in one-letter code: Small ribosomal subunit protein uS3 (229 aa).

The 69-residue stretch at 38 to 106 folds into the KH type-2 domain; sequence IREYIENKLF…KVHINVMEVK (69 aa). The span at 208–217 shows a compositional bias: acidic residues; it reads PEVDENEETK. A disordered region spans residues 208–229; the sequence is PEVDENEETKEENKEKSEEKSE. Residues 218–229 are compositionally biased toward basic and acidic residues; sequence EENKEKSEEKSE.

Belongs to the universal ribosomal protein uS3 family. As to quaternary structure, part of the 30S ribosomal subunit. Forms a tight complex with proteins S10 and S14.

Functionally, binds the lower part of the 30S subunit head. Binds mRNA in the 70S ribosome, positioning it for translation. This Natranaerobius thermophilus (strain ATCC BAA-1301 / DSM 18059 / JW/NM-WN-LF) protein is Small ribosomal subunit protein uS3.